Here is a 321-residue protein sequence, read N- to C-terminus: Transaldolase (321 aa).

Catalysis depends on lysine 132, which acts as the Schiff-base intermediate with substrate.

It belongs to the transaldolase family. Type 1 subfamily. Homodimer.

The protein resides in the cytoplasm. The catalysed reaction is D-sedoheptulose 7-phosphate + D-glyceraldehyde 3-phosphate = D-erythrose 4-phosphate + beta-D-fructose 6-phosphate. The protein operates within carbohydrate degradation; pentose phosphate pathway; D-glyceraldehyde 3-phosphate and beta-D-fructose 6-phosphate from D-ribose 5-phosphate and D-xylulose 5-phosphate (non-oxidative stage): step 2/3. Its function is as follows. Transaldolase is important for the balance of metabolites in the pentose-phosphate pathway. This Rhizobium rhizogenes (strain K84 / ATCC BAA-868) (Agrobacterium radiobacter) protein is Transaldolase.